A 257-amino-acid chain; its full sequence is Indole-3-glycerol phosphate synthase (257 aa).

Belongs to the TrpC family.

It carries out the reaction 1-(2-carboxyphenylamino)-1-deoxy-D-ribulose 5-phosphate + H(+) = (1S,2R)-1-C-(indol-3-yl)glycerol 3-phosphate + CO2 + H2O. It functions in the pathway amino-acid biosynthesis; L-tryptophan biosynthesis; L-tryptophan from chorismate: step 4/5. The sequence is that of Indole-3-glycerol phosphate synthase from Halalkalibacterium halodurans (strain ATCC BAA-125 / DSM 18197 / FERM 7344 / JCM 9153 / C-125) (Bacillus halodurans).